Here is a 601-residue protein sequence, read N- to C-terminus: Elongation factor 4 (601 aa).

Residues 2-184 (DLIRNFSIIA…EMIARVPPPT (183 aa)) enclose the tr-type G domain. Residues 14 to 19 (DHGKST) and 131 to 134 (NKID) contribute to the GTP site.

It belongs to the TRAFAC class translation factor GTPase superfamily. Classic translation factor GTPase family. LepA subfamily.

Its subcellular location is the cell inner membrane. The catalysed reaction is GTP + H2O = GDP + phosphate + H(+). Its function is as follows. Required for accurate and efficient protein synthesis under certain stress conditions. May act as a fidelity factor of the translation reaction, by catalyzing a one-codon backward translocation of tRNAs on improperly translocated ribosomes. Back-translocation proceeds from a post-translocation (POST) complex to a pre-translocation (PRE) complex, thus giving elongation factor G a second chance to translocate the tRNAs correctly. Binds to ribosomes in a GTP-dependent manner. The polypeptide is Elongation factor 4 (Polynucleobacter asymbioticus (strain DSM 18221 / CIP 109841 / QLW-P1DMWA-1) (Polynucleobacter necessarius subsp. asymbioticus)).